Consider the following 173-residue polypeptide: dCTP deaminase, dUMP-forming (173 aa).

Residues 93 to 98 (RSSTGR), aspartate 111, 119 to 121 (TLE), glutamine 138, and tyrosine 151 contribute to the dCTP site. Glutamate 121 functions as the Proton donor/acceptor in the catalytic mechanism.

This sequence belongs to the dCTP deaminase family. Homotrimer.

It catalyses the reaction dCTP + 2 H2O = dUMP + NH4(+) + diphosphate. Its pathway is pyrimidine metabolism; dUMP biosynthesis; dUMP from dCTP: step 1/1. Functionally, bifunctional enzyme that catalyzes both the deamination of dCTP to dUTP and the hydrolysis of dUTP to dUMP without releasing the toxic dUTP intermediate. The sequence is that of dCTP deaminase, dUMP-forming from Clostridium botulinum (strain Eklund 17B / Type B).